A 274-amino-acid chain; its full sequence is Undecaprenyl-diphosphatase (274 aa).

8 helical membrane passes run 1–21, 48–68, 84–104, 108–128, 143–163, 187–207, 214–234, and 254–274; these read MDWF…FLPI, VVIQ…DFAG, LGVI…GDVI, LFRP…MWVI, IGLG…LWPG, FSFY…FIKS, IGLL…YLAI, and VIFG…NGGL.

The protein belongs to the UppP family.

The protein resides in the cell membrane. The enzyme catalyses di-trans,octa-cis-undecaprenyl diphosphate + H2O = di-trans,octa-cis-undecaprenyl phosphate + phosphate + H(+). In terms of biological role, catalyzes the dephosphorylation of undecaprenyl diphosphate (UPP). Confers resistance to bacitracin. This Deinococcus geothermalis (strain DSM 11300 / CIP 105573 / AG-3a) protein is Undecaprenyl-diphosphatase.